Consider the following 396-residue polypeptide: MDRLLRIYNKEERLVVGLMSGTSADGIDAALVKVKGRGLDTKVELLEFEKFPYEEEVQKKIFELFDPHTGTVEKICHMNFLLGELFAEATLKLIKKAGLTPKDIDLIGSHGQTIYHIPNFIEDMGYKVRSTLQIGEPAVIAERTGIVTVADFRVRDVAAGGQGAPLVPYTEYILYRSPNETIALQNIGGIGNVTVLPKGGSIEDVIAFDTGPGNMVIDEVVKRITHGKMNFDKDGELASRGKVNEEFLAELLKDEFFKMKPPKTTGREHFGKNYVDNLMKKASYLEIDKYDLVATVTALTAYSVVRSYEKFIFPYYKVDKVVIGGGGSFNKTLVQMIKKQLPQVRVITQEDIGFNSDAKEAVAFAILASETINGNFNNIPKATGAKHPVVMGKISL.

21–28 (GTSADGID) provides a ligand contact to ATP.

This sequence belongs to the anhydro-N-acetylmuramic acid kinase family.

The enzyme catalyses 1,6-anhydro-N-acetyl-beta-muramate + ATP + H2O = N-acetyl-D-muramate 6-phosphate + ADP + H(+). The protein operates within amino-sugar metabolism; 1,6-anhydro-N-acetylmuramate degradation. It participates in cell wall biogenesis; peptidoglycan recycling. Its function is as follows. Catalyzes the specific phosphorylation of 1,6-anhydro-N-acetylmuramic acid (anhMurNAc) with the simultaneous cleavage of the 1,6-anhydro ring, generating MurNAc-6-P. Is required for the utilization of anhMurNAc either imported from the medium or derived from its own cell wall murein, and thus plays a role in cell wall recycling. This chain is Anhydro-N-acetylmuramic acid kinase, found in Caldanaerobacter subterraneus subsp. tengcongensis (strain DSM 15242 / JCM 11007 / NBRC 100824 / MB4) (Thermoanaerobacter tengcongensis).